Here is a 974-residue protein sequence, read N- to C-terminus: Ephrin type-B receptor 3 (974 aa).

The first 16 residues, 1–16 (MLPAVFVILALSAVQG), serve as a signal peptide directing secretion. Over 17 to 534 (LEETLMDTKW…RSSLQEQVPM (518 aa)) the chain is Extracellular. Positions 18–196 (EETLMDTKWT…FFKKCPRTTA (179 aa)) constitute an Eph LBD domain. A disulfide bridge connects residues C60 and C178. 2 consecutive Fibronectin type-III domains span residues 318-426 (VPSA…TNQA) and 427-522 (APSS…IAED). N330 and N420 each carry an N-linked (GlcNAc...) asparagine glycan. A helical transmembrane segment spans residues 535-555 (VVGSVTAGLIFIIAVVIIVIV). The Cytoplasmic portion of the chain corresponds to 556-974 (CFSRKQRNDS…QMSQTLPVQV (419 aa)). Phosphotyrosine; by autocatalysis is present on Y590. In terms of domain architecture, Protein kinase spans 609-872 (VKIEEVIGAG…QIVSSLDKLI (264 aa)). ATP is bound by residues 615–623 (IGAGEFGEV) and K641. Residue D734 is the Proton acceptor of the active site. The SAM domain occupies 901–965 (TTFPTVSDWL…LNSVQDMRLQ (65 aa)). Positions 972-974 (VQV) match the PDZ-binding motif.

Belongs to the protein kinase superfamily. Tyr protein kinase family. Ephrin receptor subfamily. As to quaternary structure, heterotetramer upon binding of the ligand. The heterotetramer is composed of an ephrin dimer and a receptor dimer. Oligomerization is probably required to induce biological responses. Post-translationally, phosphorylated. Autophosphorylates upon ligand-binding. Autophosphorylation on Tyr-590 is required for interaction with SH2 domain-containing proteins. As to expression, expressed in the embryo in pre-somitic mesoderm, caudal somites, midbrain, and cement gland. Most abundant in adult brain, eye, heart, lung and ovary. Lower levels in intestine, kidney, oviduct and pharynx.

The protein localises to the cell membrane. The protein resides in the cell projection. It is found in the dendrite. The catalysed reaction is L-tyrosyl-[protein] + ATP = O-phospho-L-tyrosyl-[protein] + ADP + H(+). In terms of biological role, receptor tyrosine kinase which binds promiscuously transmembrane ephrin-B family ligands residing on adjacent cells, leading to contact-dependent bidirectional signaling into neighboring cells. The signaling pathway downstream of the receptor is referred to as forward signaling while the signaling pathway downstream of the ephrin ligand is referred to as reverse signaling. Generally has an overlapping and redundant function with EPHB2. Like EPHB2, functions in axon guidance during development. In addition to its role in axon guidance also plays an important redundant role with other ephrin-B receptors in development and maturation of dendritic spines and the formation of excitatory synapses. May control other aspects of development through regulation of cell migration and positioning. This chain is Ephrin type-B receptor 3 (ephb3), found in Xenopus laevis (African clawed frog).